Reading from the N-terminus, the 220-residue chain is Aspartic protease inhibitor 2 (220 aa).

The first 23 residues, 1–23 (MMKCLFLLCLCLLPIVVFSSTFT), serve as a signal peptide directing secretion. Positions 24-32 (SQNLIDLPS) are excised as a propeptide. The Vacuolar targeting signal motif lies at 26-31 (NLIDLP). N-linked (GlcNAc...) asparagine glycosylation is present at Asn-51. Intrachain disulfides connect Cys-80-Cys-125 and Cys-174-Cys-185.

It belongs to the protease inhibitor I3 (leguminous Kunitz-type inhibitor) family. As to expression, tubers.

It localises to the vacuole. Functionally, inhibitor of cathepsin D (aspartic protease). May also inhibit trypsin and chymotrypsin (serine proteases). Protects the plant by inhibiting proteases of invading organisms. This is Aspartic protease inhibitor 2 from Solanum tuberosum (Potato).